The sequence spans 150 residues: Catabolic 3-dehydroquinase 2 (150 aa).

Tyr23 functions as the Proton acceptor in the catalytic mechanism. 3 residues coordinate substrate: Asn74, His80, and Asp87. The active-site Proton donor is the His100. Substrate contacts are provided by residues 101–102 (IT) and Arg111.

The protein belongs to the type-II 3-dehydroquinase family. As to quaternary structure, homododecamer. Adopts a ring-like structure, composed of an arrangement of two hexameric rings stacked on top of one another.

It catalyses the reaction 3-dehydroquinate = 3-dehydroshikimate + H2O. It functions in the pathway aromatic compound metabolism; 3,4-dihydroxybenzoate biosynthesis; 3,4-dihydroxybenzoate from 3-dehydroquinate: step 1/2. Functionally, is involved in the catabolism of quinate. Allows the utilization of quinate as carbon source via the beta-ketoadipate pathway. In Aspergillus flavus (strain ATCC 200026 / FGSC A1120 / IAM 13836 / NRRL 3357 / JCM 12722 / SRRC 167), this protein is Catabolic 3-dehydroquinase 2.